We begin with the raw amino-acid sequence, 140 residues long: ATP synthase epsilon chain (140 aa).

It belongs to the ATPase epsilon chain family. As to quaternary structure, F-type ATPases have 2 components, CF(1) - the catalytic core - and CF(0) - the membrane proton channel. CF(1) has five subunits: alpha(3), beta(3), gamma(1), delta(1), epsilon(1). CF(0) has three main subunits: a, b and c.

The protein resides in the cell inner membrane. Its function is as follows. Produces ATP from ADP in the presence of a proton gradient across the membrane. The chain is ATP synthase epsilon chain from Colwellia psychrerythraea (strain 34H / ATCC BAA-681) (Vibrio psychroerythus).